Consider the following 918-residue polypeptide: MLTLQTWLVQALFIFLTTESTGELLDPCGYISPESPVVQLHSNFTAVCVLKEKCMDYFHVNANYIVWKTNHFTIPKEQYTIINRTASSVTFTDIASLNIQLTCNILTFGQLEQNVYGITIISGLPPEKPKNLSCIVNEGKKMRCEWDGGRETHLETNFTLKSEWATHKFADCKAKRDTPTSCTVDYSTVYFVNIEVWVEAENALGKVTSDHINFDPVYKVKPNPPHNLSVINSEELSSILKLTWTNPSIKSVIILKYNIQYRTKDASTWSQIPPEDTASTRSSFTVQDLKPFTEYVFRIRCMKEDGKGYWSDWSEEASGITYEDRPSKAPSFWYKIDPSHTQGYRTVQLVWKTLPPFEANGKILDYEVTLTRWKSHLQNYTVNATKLTVNLTNDRYLATLTVRNLVGKSDAAVLTIPACDFQATHPVMDLKAFPKDNMLWVEWTTPRESVKKYILEWCVLSDKAPCITDWQQEDGTVHRTYLRGNLAESKCYLITVTPVYADGPGSPESIKAYLKQAPPSKGPTVRTKKVGKNEAVLEWDQLPVDVQNGFIRNYTIFYRTIIGNETAVNVDSSHTEYTLSSLTSDTLYMVRMAAYTDEGGKDGPEFTFTTPKFAQGEIEAIVVPVCLAFLLTTLLGVLFCFNKRDLIKKHIWPNVPDPSKSHIAQWSPHTPPRHNFNSKDQMYSDGNFTDVSVVEIEANDKKPFPEDLKSLDLFKKEKINTEGHSSGIGGSSCMSSSRPSISSSDENESSQNTSSTVQYSTVVHSGYRHQVPSVQVFSRSESTQPLLDSEERPEDLQLVDHVDGGDGILPRQQYFKQNCSQHESSPDISHFERSKQVSSVNEEDFVRLKQQISDHISQSCGSGQMKMFQEVSAADAFGPGTEGQVERFETVGMEAATDEGMPKSYLPQTVRQGGYMPQ.

An N-terminal signal peptide occupies residues 1–22; sequence MLTLQTWLVQALFIFLTTESTG. Residues 23–619 are Extracellular-facing; sequence ELLDPCGYIS…TPKFAQGEIE (597 aa). The region spanning 26–120 is the Ig-like C2-type domain; it reads DPCGYISPES…LEQNVYGITI (95 aa). Cystine bridges form between C28–C54 and C48–C103. N-linked (GlcNAc...) asparagine glycans are attached at residues N43, N83, and N131. Fibronectin type-III domains are found at residues 125 to 216, 224 to 324, 329 to 424, 426 to 517, and 518 to 613; these read PPEK…NFDP, PPHN…TYED, APSF…FQAT, PVMD…LKQA, and PPSK…TPKF. C134 and C144 are oxidised to a cystine. N-linked (GlcNAc...) asparagine glycosylation is present at N157. A disulfide bridge connects residues C172 and C182. N227 is a glycosylation site (N-linked (GlcNAc...) asparagine). The short motif at 310-314 is the WSXWS motif element; it reads WSDWS. 2 N-linked (GlcNAc...) asparagine glycosylation sites follow: N379 and N383. N390 is a glycosylation site (N-linked (GlcNAc...) (complex) asparagine). C458 and C466 form a disulfide bridge. N-linked (GlcNAc...) asparagine glycosylation is found at N553 and N564. The chain crosses the membrane as a helical span at residues 620 to 641; sequence AIVVPVCLAFLLTTLLGVLFCF. Over 642–918 the chain is Cytoplasmic; that stretch reads NKRDLIKKHI…TVRQGGYMPQ (277 aa). Residues 651–659 carry the Box 1 motif motif; the sequence is IWPNVPDPS. Disordered stretches follow at residues 660–681 and 722–758; these read KSHI…SKDQ and EGHS…STVQ. S661 and S667 each carry phosphoserine. Residues 731-755 show a composition bias toward low complexity; that stretch reads SSCMSSSRPSISSSDENESSQNTSS. S782, S789, S829, and S839 each carry phosphoserine.

This sequence belongs to the type I cytokine receptor family. Type 2 subfamily. In terms of assembly, component of a hexamer of two molecules each of IL6, IL6R and IL6ST; associates with the complex IL6:IL6R but does not interact with IL6. Forms heterodimers composed of LIFR and IL6ST (type I OSM receptor) which are activated by LIF and OSM. Also forms heterodimers composed of OSMR and IL6ST (type II receptor) which are activated by OSM but not by LIF. Component of a receptor complex composed of IL6ST/GP130, IL27RA/WSX1 and CNTFR which interacts with the neuroprotective peptide humanin. Interacts with HCK. Interacts with INPP5D/SHIP1. Interacts with SRC and YES. Interacts with ARMH4; this interaction prevents IL6ST protein homodimerization and bridges ARMH4 with IL6R and STAT3 and therefore inhibits phosphorylation of STAT3 at 'Tyr-705'. As to quaternary structure, (Microbial infection) The homodimer binds two molecules of herpes virus 8/HHV-8 protein vIL-6. In terms of processing, phosphorylation of Ser-782 down-regulates cell surface expression. Post-translationally, heavily N-glycosylated. Glycosylation is required for protein stability and localization in plasma membrane but not for ligand binding. In terms of tissue distribution, found in all the tissues and cell lines examined. Expression not restricted to IL6 responsive cells. Expressed in blood serum (at protein level).

The protein resides in the cell membrane. It is found in the secreted. Signal-transducing molecule. The receptor systems for IL6, LIF, OSM, CNTF, IL11, CTF1 and BSF3 can utilize IL6ST for initiating signal transmission. Binding of IL6 to IL6R induces IL6ST homodimerization and formation of a high-affinity receptor complex, which activates the intracellular JAK-MAPK and JAK-STAT3 signaling pathways. That causes phosphorylation of IL6ST tyrosine residues which in turn activates STAT3. In parallel, the IL6 signaling pathway induces the expression of two cytokine receptor signaling inhibitors, SOCS1 and SOCS3, which inhibit JAK and terminate the activity of the IL6 signaling pathway as a negative feedback loop. Also activates the yes-associated protein 1 (YAP) and NOTCH pathways to control inflammation-induced epithelial regeneration, independently of STAT3. Acts as a receptor for the neuroprotective peptide humanin as part of a complex with IL27RA/WSX1 and CNTFR. Mediates signals which regulate immune response, hematopoiesis, pain control and bone metabolism. Has a role in embryonic development. Essential for survival of motor and sensory neurons and for differentiation of astrocytes. Required for expression of TRPA1 in nociceptive neurons. Required for the maintenance of PTH1R expression in the osteoblast lineage and for the stimulation of PTH-induced osteoblast differentiation. Required for normal trabecular bone mass and cortical bone composition. In terms of biological role, binds to the soluble IL6:sIL6R complex (hyper-IL6), thereby blocking IL6 trans-signaling. Inhibits sIL6R-dependent acute phase response. Also blocks IL11 cluster signaling through IL11R. This Homo sapiens (Human) protein is Interleukin-6 receptor subunit beta.